A 411-amino-acid polypeptide reads, in one-letter code: Growth-regulating factor 7 (411 aa).

One can recognise a QLQ domain in the interval 38–73 (PFTPTQWMELEHQALIYKHIVANAPVPAGLLLPIRR). The region spanning 108–152 (DSEPGRCRRTDGKKWRCSRDAVVDQKYCERHINRGRHRSRKHVEG) is the WRC domain. 2 consecutive short sequence motifs (bipartite nuclear localization signal) follow at residues 113–123 (RCRRTDGKKWR) and 141–148 (RGRHRSRK). Residues 333-369 (FFTNTSSASDDKGKSRHPPSLNLLADGHTTSPQLQSP) are disordered. Residues 360–369 (HTTSPQLQSP) show a composition bias toward polar residues.

It belongs to the GRF family.

It is found in the nucleus. Its function is as follows. Transcription activator that plays a regulatory role in gibberellin-induced stem elongation. This is Growth-regulating factor 7 (GRF7) from Oryza sativa subsp. japonica (Rice).